Here is a 353-residue protein sequence, read N- to C-terminus: MDRCTSSFLLLTLVSTLSILQISFAQLVPAIMTFGDSVVDVGNNNYLPTLFRADYPPYGRDFANHKATGRFCNGKLATDITAETLGFTKYPPAYLSPEASGKNLLIGANFASAASGYDDKAALLNHAIPLYQQVEYFKEYKSKLIKIAGSKKADSIIKGAICLLSAGSSDFVQNYYVNPLLYKVYTVDAYGSFLIDNFSTFIKQVYAVGARKIGVTSLPPTGCLPAARTLFGFHEKGCVSRLNTDAQNFNKKLNAAASKLQKQYSDLKIVVFDIYSPLYDLVQNPSKSGFTEATKGCCGTGTVETTSLLCNPKSFGTCSNATQYVFWDSVHPSEAANEILATALIGQGFSLLG.

Residues methionine 1–alanine 25 form the signal peptide. The active-site Nucleophile is serine 37. Residues asparagine 197 and asparagine 320 are each glycosylated (N-linked (GlcNAc...) asparagine). Catalysis depends on residues aspartate 328 and histidine 331.

This sequence belongs to the 'GDSL' lipolytic enzyme family.

The protein resides in the secreted. The protein is GDSL esterase/lipase APG (APG) of Arabidopsis thaliana (Mouse-ear cress).